The primary structure comprises 201 residues: uncharacterized protein (201 aa).

Coiled coils occupy residues 3-43 and 76-120; these read YMDD…EVYK and TGQV…AKTK.

This is an uncharacterized protein from Archaeoglobus fulgidus (strain ATCC 49558 / DSM 4304 / JCM 9628 / NBRC 100126 / VC-16).